We begin with the raw amino-acid sequence, 336 residues long: F420-dependent glucose-6-phosphate dehydrogenase (336 aa).

Asp-40 is a binding site for coenzyme F420-(gamma-Glu)n. His-41 serves as the catalytic Proton donor. Residues Thr-77 and 108–109 (TG) contribute to the coenzyme F420-(gamma-Glu)n site. Glu-110 serves as the catalytic Proton acceptor. Coenzyme F420-(gamma-Glu)n contacts are provided by residues Asn-113, 176–177 (SG), and 179–180 (AA). Residues Thr-194, Lys-197, Lys-258, and Arg-282 each coordinate substrate.

It belongs to the F420-dependent glucose-6-phosphate dehydrogenase family. As to quaternary structure, homodimer.

It catalyses the reaction oxidized coenzyme F420-(gamma-L-Glu)(n) + D-glucose 6-phosphate + H(+) = 6-phospho-D-glucono-1,5-lactone + reduced coenzyme F420-(gamma-L-Glu)(n). Functionally, catalyzes the coenzyme F420-dependent oxidation of glucose 6-phosphate (G6P) to 6-phosphogluconolactone. The chain is F420-dependent glucose-6-phosphate dehydrogenase from Microbacterium testaceum (strain StLB037).